We begin with the raw amino-acid sequence, 280 residues long: Bis(5'-nucleosyl)-tetraphosphatase, symmetrical (280 aa).

The protein belongs to the Ap4A hydrolase family.

The enzyme catalyses P(1),P(4)-bis(5'-adenosyl) tetraphosphate + H2O = 2 ADP + 2 H(+). Hydrolyzes diadenosine 5',5'''-P1,P4-tetraphosphate to yield ADP. The polypeptide is Bis(5'-nucleosyl)-tetraphosphatase, symmetrical (Paracidovorax citrulli (strain AAC00-1) (Acidovorax citrulli)).